A 778-amino-acid polypeptide reads, in one-letter code: Zinc finger protein 749 (778 aa).

A KRAB domain is found at 8 to 101 (MVFEDVAIYF…ILKDILHLAE (94 aa)). The segment at 152–174 (FTCTQGGKDFTASSDLLQQQVLN) adopts a C2H2-type 1; degenerate zinc-finger fold. The C2H2-type 2; degenerate zinc-finger motif lies at 196-218 (FNSSQGGKDFCHQHGLFEHQKTH). Residues 224–246 (YEFSECGELFRYNSNLIKYQQNH) form a C2H2-type 3; degenerate zinc finger. The segment at 252–274 (YEGTEYGKTFIRKSNLVQHQKIH) adopts a C2H2-type 4; degenerate zinc-finger fold. C2H2-type zinc fingers lie at residues 298–320 (YECT…QKTH), 326–348 (YECN…QKVH), 354–376 (YECS…QRVH), 382–404 (FECS…QRVH), 410–432 (YKCS…LKIH), and 438–460 (YECT…QKIH). Lys466 carries the N6-acetyllysine modification. 2 C2H2-type zinc fingers span residues 483 to 505 (YTCS…QKIH) and 511 to 533 (YECT…EKIH). Lys539 carries the N6-acetyllysine modification. Residues 556–578 (YVCSECGKAFLTQAHLDGHQKIQ) form a C2H2-type 13; degenerate zinc finger. 3 C2H2-type zinc fingers span residues 584-606 (YECN…QRIH), 612-634 (YKCS…QKVH), and 640-662 (YECS…QRVH). The C2H2-type 17; atypical zinc finger occupies 668–690 (YECSNCGKFLRYRSTFIKHHKVC). The C2H2-type 18 zinc-finger motif lies at 696–718 (HECSKCRELFRTKSSLIIHQQSH). The segment at 751-773 (YECGESSKVFKYNSSLIKHQIIH) adopts a C2H2-type 19; degenerate zinc-finger fold. Glycyl lysine isopeptide (Lys-Gly) (interchain with G-Cter in SUMO2) cross-links involve residues Lys761 and Lys768.

Belongs to the krueppel C2H2-type zinc-finger protein family.

The protein localises to the nucleus. In terms of biological role, may be involved in transcriptional regulation. The chain is Zinc finger protein 749 (ZNF749) from Homo sapiens (Human).